The chain runs to 990 residues: Bacteriophage adsorption protein A (990 aa).

A signal peptide spans Met-1 to Ala-27. 3 TPR repeats span residues Ile-81–Asp-114, Ala-612–Asn-645, and Ser-646–Asp-679.

As to quaternary structure, (Microbial infection) Interacts with N4 phage non-contractile sheath protein; this interaction is essential for viral adsorption to the host.

The protein localises to the cell outer membrane. (Microbial infection) Allows N4 phage attachment by binding to the viral non-contractile sheath protein. In Escherichia coli (strain K12), this protein is Bacteriophage adsorption protein A (nfrA).